Consider the following 100-residue polypeptide: Urease subunit gamma (100 aa).

The protein belongs to the urease gamma subunit family. As to quaternary structure, heterotrimer of UreA (gamma), UreB (beta) and UreC (alpha) subunits. Three heterotrimers associate to form the active enzyme.

Its subcellular location is the cytoplasm. It catalyses the reaction urea + 2 H2O + H(+) = hydrogencarbonate + 2 NH4(+). Its pathway is nitrogen metabolism; urea degradation; CO(2) and NH(3) from urea (urease route): step 1/1. The protein is Urease subunit gamma of Allorhizobium ampelinum (strain ATCC BAA-846 / DSM 112012 / S4) (Agrobacterium vitis (strain S4)).